A 689-amino-acid polypeptide reads, in one-letter code: Glycine--tRNA ligase beta subunit (689 aa).

It belongs to the class-II aminoacyl-tRNA synthetase family. As to quaternary structure, tetramer of two alpha and two beta subunits.

Its subcellular location is the cytoplasm. The catalysed reaction is tRNA(Gly) + glycine + ATP = glycyl-tRNA(Gly) + AMP + diphosphate. The protein is Glycine--tRNA ligase beta subunit of Photobacterium profundum (strain SS9).